The following is a 381-amino-acid chain: tRNA (guanine(26)-N(2))-dimethyltransferase (381 aa).

The Trm1 methyltransferase domain occupies 7–378 (IEVQEGKAKI…APYEVFIETI (372 aa)). S-adenosyl-L-methionine-binding residues include Arg-39, Arg-64, Asp-81, Asp-123, and Ala-124.

The protein belongs to the class I-like SAM-binding methyltransferase superfamily. Trm1 family.

The enzyme catalyses guanosine(26) in tRNA + 2 S-adenosyl-L-methionine = N(2)-dimethylguanosine(26) in tRNA + 2 S-adenosyl-L-homocysteine + 2 H(+). In terms of biological role, dimethylates a single guanine residue at position 26 of a number of tRNAs using S-adenosyl-L-methionine as donor of the methyl groups. The polypeptide is tRNA (guanine(26)-N(2))-dimethyltransferase (Pyrococcus horikoshii (strain ATCC 700860 / DSM 12428 / JCM 9974 / NBRC 100139 / OT-3)).